A 193-amino-acid chain; its full sequence is Ion-translocating oxidoreductase complex subunit A (193 aa).

The next 6 membrane-spanning stretches (helical) occupy residues 5–25, 47–67, 72–92, 102–122, 134–154, and 171–191; these read LLLF…FLGL, FVMT…LIPL, LRTL…EMVV, LLGI…VALL, ALYG…FAAI, and AIAL…SGLV.

The protein belongs to the NqrDE/RnfAE family. In terms of assembly, the complex is composed of six subunits: RnfA, RnfB, RnfC, RnfD, RnfE and RnfG.

The protein localises to the cell inner membrane. Functionally, part of a membrane-bound complex that couples electron transfer with translocation of ions across the membrane. In Citrobacter koseri (strain ATCC BAA-895 / CDC 4225-83 / SGSC4696), this protein is Ion-translocating oxidoreductase complex subunit A.